Here is a 218-residue protein sequence, read N- to C-terminus: Large ribosomal subunit protein uL3 (218 aa).

The protein belongs to the universal ribosomal protein uL3 family. Part of the 50S ribosomal subunit. Forms a cluster with proteins L14 and L19.

Functionally, one of the primary rRNA binding proteins, it binds directly near the 3'-end of the 23S rRNA, where it nucleates assembly of the 50S subunit. This is Large ribosomal subunit protein uL3 from Corynebacterium glutamicum (strain R).